Here is a 1038-residue protein sequence, read N- to C-terminus: uncharacterized protein (1038 aa).

The span at Met-1–Gly-14 shows a compositional bias: polar residues. Positions Met-1–Ser-100 are disordered. Over residues Asn-58 to Ile-71 the composition is skewed to basic and acidic residues. Residues Ile-72–Asn-83 show a composition bias toward acidic residues. 3 positions are modified to phosphoserine: Ser-112, Ser-113, and Ser-114. Disordered regions lie at residues Gly-144–Arg-201, Glu-360–Ala-381, Ser-422–Leu-441, Gln-454–Leu-526, and Thr-556–Thr-575. The segment covering Ser-156–Gln-179 has biased composition (low complexity). Positions Asp-180 to Val-198 are enriched in basic and acidic residues. Composition is skewed to basic and acidic residues over residues His-426–Leu-441 and Asp-489–Pro-505. Residue Ser-436 is modified to Phosphoserine. Polar residues predominate over residues Ser-506–Pro-522. Phosphoserine is present on residues Ser-618 and Ser-856. 3 disordered regions span residues Arg-803 to Asp-864, Gly-940 to Arg-974, and Lys-1005 to Lys-1024. Low complexity predominate over residues Thr-826 to Ser-859. The segment covering Val-955–Arg-974 has biased composition (polar residues). A compositionally biased stretch (low complexity) spans Glu-1009 to Ile-1020.

It is found in the cytoplasm. This is an uncharacterized protein from Schizosaccharomyces pombe (strain 972 / ATCC 24843) (Fission yeast).